The chain runs to 199 residues: Chorismate pyruvate-lyase (199 aa).

Belongs to the chorismate pyruvate-lyase type 2 family.

The catalysed reaction is chorismate = 4-hydroxybenzoate + pyruvate. Functionally, removes the pyruvyl group from chorismate to provide 4-hydroxybenzoate (4HB). Involved in the synthesis of glycosylated p-hydroxybenzoic acid methyl esters (p-HBADs) and phenolic glycolipids (PGL) that play important roles in the pathogenesis of mycobacterial infections. In Mycobacterium bovis (strain ATCC BAA-935 / AF2122/97), this protein is Chorismate pyruvate-lyase.